The primary structure comprises 61 residues: Large ribosomal subunit protein bL32 (61 aa).

Over residues Met-1–Arg-16 the composition is skewed to basic residues. The interval Met-1–Glu-35 is disordered.

This sequence belongs to the bacterial ribosomal protein bL32 family.

The polypeptide is Large ribosomal subunit protein bL32 (Agrobacterium fabrum (strain C58 / ATCC 33970) (Agrobacterium tumefaciens (strain C58))).